The following is a 191-amino-acid chain: Rho-related GTP-binding protein RhoH (191 aa).

11 to 18 (GDSAVGKT) contributes to the GTP binding site. An Effector region motif is present at residues 33–41 (YKPTVYENT). GTP is bound at residue 58 to 62 (DTAGN). The segment at 73-86 (YQQADVVLMCYSVA) is interaction with ZAP70. 116–119 (TQTD) contributes to the GTP binding site. Cys-188 is subject to Cysteine methyl ester. Cys-188 carries S-geranylgeranyl cysteine lipidation. Residues 189–191 (KIL) constitute a propeptide, removed in mature form.

It belongs to the small GTPase superfamily. Rho family. Interacts with GDI1 and GDI2. Interacts with ZAP70 (via SH2 domains) and the interaction is enhanced by its phosphorylation by LCK. Interacts with SYK and the interaction is enhanced by its phosphorylation by FYN. Phosphorylated on tyrosine by LCK. Phosphorylated by FYN. Phosphorylation enhances the interactions with ZAP70 and SYK and is critical for its function in thymocyte development.

It is found in the cytoplasm. Its subcellular location is the cell membrane. In terms of biological role, binds GTP but lacks intrinsic GTPase activity and is resistant to Rho-specific GTPase-activating proteins. Inhibits the activation of NF-kappa-B by TNF and IKKB and the activation of CRK/p38 by TNF. Inhibits activities of RAC1, RHOA and CDC42. Negatively regulates leukotriene production in neutrophils. Negative regulator of hematopoietic progenitor cell proliferation, survival and migration. Critical regulator of thymocyte development and T-cell antigen receptor (TCR) signaling by mediating recruitment and activation of ZAP70. Required for phosphorylation of CD3Z, membrane translocation of ZAP70 and subsequent activation of the ZAP70-mediated pathways. Essential for efficient beta-selection and positive selection by promoting the ZAP70-dependent phosphorylation of the LAT signalosome during pre-TCR and TCR signaling. Crucial for thymocyte maturation during DN3 to DN4 transition and during positive selection. Plays critical roles in mast cell function by facilitating phosphorylation of SYK in Fc epsilon RI-mediated signal transduction. Essential for the phosphorylation of LAT, LCP2, PLCG1 and PLCG2 and for Ca(2+) mobilization in mast cells. This chain is Rho-related GTP-binding protein RhoH (RHOH), found in Bos taurus (Bovine).